The primary structure comprises 246 residues: Acetoacetate decarboxylase (246 aa).

Residue lysine 116 is the Schiff-base intermediate with acetoacetate of the active site.

This sequence belongs to the ADC family.

It carries out the reaction acetoacetate + H(+) = acetone + CO2. Catalyzes the conversion of acetoacetate to acetone and carbon dioxide. In Burkholderia cenocepacia (strain HI2424), this protein is Acetoacetate decarboxylase.